Consider the following 331-residue polypeptide: UDP-GalNAc:beta-1,3-N-acetylgalactosaminyltransferase 1 (331 aa).

At 1–20 (MAPALPITLPSKMSLRSLKW) the chain is on the cytoplasmic side. Residues 21-43 (SLLLLSLLSFLVMWYLSLPHYNV) traverse the membrane as a helical; Signal-anchor for type II membrane protein segment. At 44-331 (IERVNWMYFY…VMLRNTTCHY (288 aa)) the chain is on the lumenal side. 5 N-linked (GlcNAc...) asparagine glycosylation sites follow: asparagine 72, asparagine 154, asparagine 198, asparagine 212, and asparagine 326.

The protein belongs to the glycosyltransferase 31 family. Requires Mg(2+) as cofactor.

The protein localises to the golgi apparatus membrane. The enzyme catalyses a globoside Gb3Cer (d18:1(4E)) + UDP-N-acetyl-alpha-D-galactosamine = a globoside Gb4Cer (d18:1(4E)) + UDP + H(+). It functions in the pathway protein modification; protein glycosylation. In terms of biological role, transfers N-acetylgalactosamine onto globotriaosylceramide. Plays a critical role in preimplantation stage embryonic development. In Sus scrofa (Pig), this protein is UDP-GalNAc:beta-1,3-N-acetylgalactosaminyltransferase 1 (B3GALNT1).